The chain runs to 347 residues: Phosphate acyltransferase (347 aa).

The protein belongs to the PlsX family. In terms of assembly, homodimer. Probably interacts with PlsY.

The protein localises to the cytoplasm. It carries out the reaction a fatty acyl-[ACP] + phosphate = an acyl phosphate + holo-[ACP]. It functions in the pathway lipid metabolism; phospholipid metabolism. In terms of biological role, catalyzes the reversible formation of acyl-phosphate (acyl-PO(4)) from acyl-[acyl-carrier-protein] (acyl-ACP). This enzyme utilizes acyl-ACP as fatty acyl donor, but not acyl-CoA. The chain is Phosphate acyltransferase from Anaplasma marginale (strain St. Maries).